Reading from the N-terminus, the 229-residue chain is Small ribosomal subunit protein mS23 (229 aa).

This sequence belongs to the mitochondrion-specific ribosomal protein mS23 family. Component of the mitochondrial small ribosomal subunit.

The protein localises to the mitochondrion. In Yarrowia lipolytica (strain CLIB 122 / E 150) (Yeast), this protein is Small ribosomal subunit protein mS23 (RSM25).